The sequence spans 136 residues: Mini-ribonuclease 3 (136 aa).

Asp-20 is an active-site residue.

This sequence belongs to the MrnC RNase family. In terms of assembly, homodimer. It depends on Mg(2+) as a cofactor.

It is found in the cytoplasm. Involved in correct processing of both the 5' and 3' ends of 23S rRNA precursor. Processes 30S rRNA precursor transcript even in absence of ribonuclease 3 (Rnc); Rnc processes 30S rRNA into smaller rRNA precursors. This is Mini-ribonuclease 3 from Listeria monocytogenes serovar 1/2a (strain ATCC BAA-679 / EGD-e).